Here is a 495-residue protein sequence, read N- to C-terminus: Probable leucine aminopeptidase 2 (495 aa).

The signal sequence occupies residues 1 to 21; that stretch reads MKSQLLSLAVAVTTISQGVVG. The PA domain occupies 130-216; it reads MAELVVAKNN…SQEDGKNLAT (87 aa). Asn142 and Asn235 each carry an N-linked (GlcNAc...) asparagine glycan. His259 and Asp271 together coordinate Zn(2+). Asn272 carries an N-linked (GlcNAc...) asparagine glycan. The Proton acceptor role is filled by Glu303. Zn(2+) contacts are provided by Glu304 and Asp332. The N-linked (GlcNAc...) asparagine glycan is linked to Asn352. A Zn(2+)-binding site is contributed by His430.

Belongs to the peptidase M28 family. M28A subfamily. Monomer. It depends on Zn(2+) as a cofactor.

It is found in the secreted. Extracellular aminopeptidase that releases a wide variety of amino acids from natural peptides and contributes to pathogenicity. This chain is Probable leucine aminopeptidase 2 (LAP2), found in Arthroderma benhamiae (strain ATCC MYA-4681 / CBS 112371) (Trichophyton mentagrophytes).